The chain runs to 509 residues: Probable DNA ligase (509 aa).

Residue aspartate 218 participates in ATP binding. Catalysis depends on lysine 220, which acts as the N6-AMP-lysine intermediate. 6 residues coordinate ATP: arginine 225, arginine 240, glutamate 269, phenylalanine 302, arginine 374, and lysine 380.

It belongs to the ATP-dependent DNA ligase family. It depends on Mg(2+) as a cofactor.

The catalysed reaction is ATP + (deoxyribonucleotide)n-3'-hydroxyl + 5'-phospho-(deoxyribonucleotide)m = (deoxyribonucleotide)n+m + AMP + diphosphate.. DNA ligase that seals nicks in double-stranded DNA during DNA replication, DNA recombination and DNA repair. The polypeptide is Probable DNA ligase (Nocardioides sp. (strain ATCC BAA-499 / JS614)).